Here is a 445-residue protein sequence, read N- to C-terminus: Cytoplasmic tRNA 2-thiolation protein 2 (445 aa).

A compositionally biased stretch (acidic residues) spans 1–11; sequence MCSIGEDDFGD. Residues 1–26 form a disordered region; sequence MCSIGEDDFGDEGGVHAMKEESPLPE. The span at 13 to 22 shows a compositional bias: basic and acidic residues; the sequence is GGVHAMKEES.

It belongs to the CTU2/NCS2 family.

It localises to the cytoplasm. It functions in the pathway tRNA modification; 5-methoxycarbonylmethyl-2-thiouridine-tRNA biosynthesis. Its function is as follows. Plays a central role in 2-thiolation of mcm(5)S(2)U at tRNA wobble positions of tRNA(Lys), tRNA(Glu) and tRNA(Gln). May act by forming a heterodimer with NCS6/CTU1 that ligates sulfur from thiocarboxylated URM1 onto the uridine of tRNAs at wobble position. The sequence is that of Cytoplasmic tRNA 2-thiolation protein 2 from Aedes aegypti (Yellowfever mosquito).